Consider the following 296-residue polypeptide: Ribosomal protein L11 methyltransferase (296 aa).

Thr-147, Gly-168, Asp-190, and Asn-232 together coordinate S-adenosyl-L-methionine.

This sequence belongs to the methyltransferase superfamily. PrmA family.

It localises to the cytoplasm. The enzyme catalyses L-lysyl-[protein] + 3 S-adenosyl-L-methionine = N(6),N(6),N(6)-trimethyl-L-lysyl-[protein] + 3 S-adenosyl-L-homocysteine + 3 H(+). Functionally, methylates ribosomal protein L11. This is Ribosomal protein L11 methyltransferase from Marinomonas sp. (strain MWYL1).